Reading from the N-terminus, the 593-residue chain is Glutamate decarboxylase 1 (593 aa).

Low complexity predominate over residues 1 to 12 (MASSTPSPATSS). The tract at residues 1-22 (MASSTPSPATSSNAGADPNTTN) is disordered. The residue at position 77 (serine 77) is a Phosphoserine. A 4-aminobutanoate-binding site is contributed by 189-191 (QLS). Lysine 404 bears the N6-(pyridoxal phosphate)lysine mark. Residue arginine 566 participates in 4-aminobutanoate binding.

The protein belongs to the group II decarboxylase family. Homodimer. Pyridoxal 5'-phosphate serves as cofactor. Expressed in brain and pancreatic islets.

It carries out the reaction L-glutamate + H(+) = 4-aminobutanoate + CO2. Catalyzes the synthesis of the inhibitory neurotransmitter gamma-aminobutyric acid (GABA) with pyridoxal 5'-phosphate as cofactor. The chain is Glutamate decarboxylase 1 (Gad1) from Rattus norvegicus (Rat).